We begin with the raw amino-acid sequence, 274 residues long: tRNA-cytidine(32) 2-sulfurtransferase (274 aa).

The short motif at 40–45 (SGGKDS) is the PP-loop motif element. Cys-115, Cys-118, and Cys-206 together coordinate [4Fe-4S] cluster.

It belongs to the TtcA family. As to quaternary structure, homodimer. Requires Mg(2+) as cofactor. It depends on [4Fe-4S] cluster as a cofactor.

The protein localises to the cytoplasm. It carries out the reaction cytidine(32) in tRNA + S-sulfanyl-L-cysteinyl-[cysteine desulfurase] + AH2 + ATP = 2-thiocytidine(32) in tRNA + L-cysteinyl-[cysteine desulfurase] + A + AMP + diphosphate + H(+). Its pathway is tRNA modification. In terms of biological role, catalyzes the ATP-dependent 2-thiolation of cytidine in position 32 of tRNA, to form 2-thiocytidine (s(2)C32). The sulfur atoms are provided by the cysteine/cysteine desulfurase (IscS) system. The polypeptide is tRNA-cytidine(32) 2-sulfurtransferase (Ectopseudomonas mendocina (strain ymp) (Pseudomonas mendocina)).